The following is a 152-amino-acid chain: uncharacterized protein (152 aa).

The Cytoplasmic segment spans residues 1 to 5 (MWFPQ). Residues 6–26 (IIAGMAAGGAASAMTPGKVLF) form a helical membrane-spanning segment. The Extracellular segment spans residues 27-38 (TNALGLGCSRSR). The chain crosses the membrane as a helical span at residues 39–59 (GLFLEMFGTAVLCFTVLMTAV). The Cytoplasmic segment spans residues 60 to 65 (EKRETN). A helical membrane pass occupies residues 66–86 (FMAALPIGISLFMAHMALTGY). The Extracellular segment spans residues 87 to 110 (TGTGVNPARSLGAAVAARYFPHYH). The NPA signature appears at 92 to 94 (NPA). A helical transmembrane segment spans residues 111 to 131 (WIYWISPLLGAFLAWSVWQLL). At 132–152 (QILDYTTYVNAEKAAGQKKED) the chain is on the cytoplasmic side.

It belongs to the MIP/aquaporin (TC 1.A.8) family.

The protein localises to the membrane. This is an uncharacterized protein from Saccharomyces cerevisiae (strain YJM789) (Baker's yeast).